Here is a 196-residue protein sequence, read N- to C-terminus: Probable GTP-binding protein EngB (196 aa).

The region spanning 21–195 is the EngB-type G domain; it reads DVSEICLIGR…YELIDKLLGS (175 aa). GTP-binding positions include 29–36, 56–60, 75–78, 142–145, and 174–176; these read GRSNVGKS, GKTRL, DAPG, TKLD, and ISN. Mg(2+) contacts are provided by Ser36 and Thr58.

Belongs to the TRAFAC class TrmE-Era-EngA-EngB-Septin-like GTPase superfamily. EngB GTPase family. Mg(2+) is required as a cofactor.

Its function is as follows. Necessary for normal cell division and for the maintenance of normal septation. The chain is Probable GTP-binding protein EngB from Mycoplasma mycoides subsp. mycoides SC (strain CCUG 32753 / NCTC 10114 / PG1).